A 415-amino-acid chain; its full sequence is MKNKYYPLRSSMDEMSAKNDNEIDLEKGPLPEYNSEDGSTLPPYSDLNNPKQMGQNITKLFNWNKSTTPPDYDENRLHITDEGNNPPNTHRENHSSGTADNSSPFLIKLLISFTPIVLLNAPAVCYLKYKDAFFKNYGAAEWTLFGFWCLVCTLALIFLTYFYETWTKAVKVTVIFLAQCVKVTVIFLAKCVKVTVIFLAKCVKVTAISLAKCIKVTAIFLAQCVKVTAVGLYNSREKWVVIIWLLWVVICYTLFLRSKFGNLNLNKALICSTCSISAALLLFLLYVRLPFWTLKHMFSGLFQVLGVQSCVVIVTKGLTYLFDKHIDATGYEIEASSLFVIGNFLFFYEMECPGALKRMPKFIRNGIASFLEGIGNIGNAIGRIGNAIGRIGNAFRGANDNNDIPLGEMEVESEV.

2 disordered regions span residues 1 to 49 (MKNK…DLNN) and 67 to 99 (TTPPDYDENRLHITDEGNNPPNTHRENHSSGTA). A compositionally biased stretch (basic and acidic residues) spans 11-29 (SMDEMSAKNDNEIDLEKGP). A run of 7 helical transmembrane segments spans residues 105–125 (FLIKLLISFTPIVLLNAPAVC), 142–162 (WTLFGFWCLVCTLALIFLTYF), 169–189 (AVKVTVIFLAQCVKVTVIFLA), 205–225 (VTAISLAKCIKVTAIFLAQCV), 240–260 (VVIIWLLWVVICYTLFLRSKF), 274–294 (CSISAALLLFLLYVRLPFWTL), and 298–318 (FSGLFQVLGVQSCVVIVTKGL).

Belongs to the WTF family. Homomer. Forms protein aggregates. The two isoforms can interact with each other and with themselves. High sequence similarity is required for their interaction.

It is found in the spore membrane. The protein localises to the vacuole membrane. The protein resides in the ascus epiplasm. It localises to the cytoplasm. Its subcellular location is the endoplasmic reticulum membrane. Functionally, promotes unequal transmission of alleles from the parental zygote to progeny spores by acting as poison/antidote system where the poison and antidote proteins are produced from the same locus; the poison component is trans-acting and targets all spores within an ascus whereas the antidote component is spore-specific, leading to poisoning of all progeny that do not inherit the allele. In terms of biological role, localizes isoform 2 to the vacuole thereby facilitating its degradation. Its function is as follows. Forms toxic aggregates that disrupt spore maturation. The chain is Meiotic driver wtf36 from Schizosaccharomyces pombe (Fission yeast).